A 711-amino-acid chain; its full sequence is Protein mono-ADP-ribosyltransferase PARP12 (711 aa).

3 consecutive C3H1-type zinc fingers follow at residues 103–128 (LCKF…HNLK), 164–188 (ICLH…IKLH), and 189–211 (ICQY…HEFT). The interval 247 to 279 (SALSKVSPSPAGPQGSSERKDSSGPVSPGTPSQ) is disordered. Phosphoserine is present on S268. 2 consecutive C3H1-type zinc fingers follow at residues 280–307 (EESE…HFHL) and 281–306 (ESEQ…VHFH). 2 WWE domains span residues 308 to 371 (PYRW…RLST) and 374 to 468 (SVTK…KVCR). C484 bears the ADP-ribosylcysteine mark. Positions 494–708 (IPDYWDPAAL…IFVALGNLFT (215 aa)) constitute a PARP catalytic domain. An ADP-ribosyl aspartic acid mark is found at D610 and D621.

The protein belongs to the ARTD/PARP family. As to quaternary structure, interacts with PARP11; this interaction plays a key role in zika virus suppression. Interacts with ISG15. Post-translationally, auto-mono-ADP-ribosylated. In terms of processing, phosphorylated by PRKD1.

The protein resides in the nucleus. The protein localises to the golgi apparatus. Its subcellular location is the trans-Golgi network. It localises to the cytoplasm. It is found in the stress granule. The enzyme catalyses L-aspartyl-[protein] + NAD(+) = 4-O-(ADP-D-ribosyl)-L-aspartyl-[protein] + nicotinamide. It catalyses the reaction L-cysteinyl-[protein] + NAD(+) = S-(ADP-D-ribosyl)-L-cysteinyl-[protein] + nicotinamide + H(+). Mono-ADP-ribosyltransferase that mediates mono-ADP-ribosylation of target proteins. Displays anti-alphavirus activity during IFN-gamma immune activation by directly ADP-ribosylating the alphaviral non-structural proteins nsP3 and nsP4. Acts as a component of the PRKD1-driven regulatory cascade that selectively controls a major branch of the basolateral transport pathway by catalyzing the MARylation of GOLGA1. Acts also as a key regulator of mitochondrial function, protein translation, and inflammation. Inhibits PINK1/Parkin-dependent mitophagy and promotes cartilage degeneration by inhibiting the ubiquitination and SUMOylation of MFN1/2 by upregulating ISG15 and ISGylation. This is Protein mono-ADP-ribosyltransferase PARP12 from Mus musculus (Mouse).